The primary structure comprises 620 residues: Chaperone protein HscA homolog (620 aa).

Belongs to the heat shock protein 70 family.

In terms of biological role, chaperone involved in the maturation of iron-sulfur cluster-containing proteins. Has a low intrinsic ATPase activity which is markedly stimulated by HscB. This chain is Chaperone protein HscA homolog, found in Neisseria meningitidis serogroup A / serotype 4A (strain DSM 15465 / Z2491).